The primary structure comprises 238 residues: 3-deoxy-manno-octulosonate cytidylyltransferase (238 aa).

The protein belongs to the KdsB family.

It localises to the cytoplasm. It catalyses the reaction 3-deoxy-alpha-D-manno-oct-2-ulosonate + CTP = CMP-3-deoxy-beta-D-manno-octulosonate + diphosphate. Its pathway is nucleotide-sugar biosynthesis; CMP-3-deoxy-D-manno-octulosonate biosynthesis; CMP-3-deoxy-D-manno-octulosonate from 3-deoxy-D-manno-octulosonate and CTP: step 1/1. The protein operates within bacterial outer membrane biogenesis; lipopolysaccharide biosynthesis. Activates KDO (a required 8-carbon sugar) for incorporation into bacterial lipopolysaccharide in Gram-negative bacteria. This is 3-deoxy-manno-octulosonate cytidylyltransferase from Nitratiruptor sp. (strain SB155-2).